The primary structure comprises 329 residues: DNA-directed RNA polymerase subunit alpha (329 aa).

Positions M1–R234 are alpha N-terminal domain (alpha-NTD). The alpha C-terminal domain (alpha-CTD) stretch occupies residues F248–L329.

The protein belongs to the RNA polymerase alpha chain family. Homodimer. The RNAP catalytic core consists of 2 alpha, 1 beta, 1 beta' and 1 omega subunit. When a sigma factor is associated with the core the holoenzyme is formed, which can initiate transcription.

The catalysed reaction is RNA(n) + a ribonucleoside 5'-triphosphate = RNA(n+1) + diphosphate. In terms of biological role, DNA-dependent RNA polymerase catalyzes the transcription of DNA into RNA using the four ribonucleoside triphosphates as substrates. The protein is DNA-directed RNA polymerase subunit alpha of Shewanella amazonensis (strain ATCC BAA-1098 / SB2B).